The following is a 263-amino-acid chain: 3-methyl-2-oxobutanoate hydroxymethyltransferase (263 aa).

The Mg(2+) site is built by aspartate 45 and aspartate 84. 3-methyl-2-oxobutanoate-binding positions include 45 to 46 (DS), aspartate 84, and lysine 112. Glutamate 114 serves as a coordination point for Mg(2+). Glutamate 181 (proton acceptor) is an active-site residue.

This sequence belongs to the PanB family. As to quaternary structure, homodecamer; pentamer of dimers. Requires Mg(2+) as cofactor.

It localises to the cytoplasm. The catalysed reaction is 3-methyl-2-oxobutanoate + (6R)-5,10-methylene-5,6,7,8-tetrahydrofolate + H2O = 2-dehydropantoate + (6S)-5,6,7,8-tetrahydrofolate. The protein operates within cofactor biosynthesis; (R)-pantothenate biosynthesis; (R)-pantoate from 3-methyl-2-oxobutanoate: step 1/2. Catalyzes the reversible reaction in which hydroxymethyl group from 5,10-methylenetetrahydrofolate is transferred onto alpha-ketoisovalerate to form ketopantoate. This Chromohalobacter salexigens (strain ATCC BAA-138 / DSM 3043 / CIP 106854 / NCIMB 13768 / 1H11) protein is 3-methyl-2-oxobutanoate hydroxymethyltransferase.